An 86-amino-acid chain; its full sequence is Cerebrin prohormone (86 aa).

The first 27 residues, 1–27, serve as a signal peptide directing secretion; the sequence is MFGYRSLLVLLVTLSLCLLLQSSHCSA. A propeptide spanning residues 28–64 is cleaved from the precursor; that stretch reads VRTYGNDLDARARREIISLAARLIKLSMYGPEDDSFV. I83 carries the post-translational modification Isoleucine amide.

In terms of tissue distribution, expressed only in cerebral ganglion.

Its subcellular location is the secreted. Its function is as follows. May function as a hormone and may play a neuromodulatory role. The sequence is that of Cerebrin prohormone (CBPH) from Aplysia californica (California sea hare).